Here is a 31-residue protein sequence, read N- to C-terminus: Cytochrome b6-f complex subunit 6 (31 aa).

Residues leucine 4–glycine 24 traverse the membrane as a helical segment.

It belongs to the PetL family. As to quaternary structure, the 4 large subunits of the cytochrome b6-f complex are cytochrome b6, subunit IV (17 kDa polypeptide, PetD), cytochrome f and the Rieske protein, while the 4 small subunits are PetG, PetL, PetM and PetN. The complex functions as a dimer.

The protein resides in the plastid. Its subcellular location is the chloroplast thylakoid membrane. Its function is as follows. Component of the cytochrome b6-f complex, which mediates electron transfer between photosystem II (PSII) and photosystem I (PSI), cyclic electron flow around PSI, and state transitions. PetL is important for photoautotrophic growth as well as for electron transfer efficiency and stability of the cytochrome b6-f complex. The chain is Cytochrome b6-f complex subunit 6 from Oxybasis rubra (Red goosefoot).